Here is a 164-residue protein sequence, read N- to C-terminus: Large ribosomal subunit protein eL24z (164 aa).

A compositionally biased stretch (basic and acidic residues) spans 117 to 133 (ERIKKTKDEKKAKKVEY). Residues 117 to 164 (ERIKKTKDEKKAKKVEYASKQQKSQVKGNIPKSAAPKAAKMGGGGGRR) are disordered.

Belongs to the eukaryotic ribosomal protein eL24 family. Interacts with the cauliflower mosaic virus transactivator TAV to form a TAV/60S complex. Interacts with REIL1 AND REIL2.

In terms of biological role, might have an extraribosomal function in reinitiation of translation. This Arabidopsis thaliana (Mouse-ear cress) protein is Large ribosomal subunit protein eL24z (RPL24A).